The following is a 925-amino-acid chain: Alanine--tRNA ligase (925 aa).

Residues His611, His615, Cys714, and His718 each coordinate Zn(2+).

It belongs to the class-II aminoacyl-tRNA synthetase family. Zn(2+) is required as a cofactor.

Its subcellular location is the cytoplasm. The catalysed reaction is tRNA(Ala) + L-alanine + ATP = L-alanyl-tRNA(Ala) + AMP + diphosphate. Functionally, catalyzes the attachment of alanine to tRNA(Ala) in a two-step reaction: alanine is first activated by ATP to form Ala-AMP and then transferred to the acceptor end of tRNA(Ala). Also edits incorrectly charged Ser-tRNA(Ala) and Gly-tRNA(Ala) via its editing domain. In Methanosarcina acetivorans (strain ATCC 35395 / DSM 2834 / JCM 12185 / C2A), this protein is Alanine--tRNA ligase.